A 508-amino-acid polypeptide reads, in one-letter code: Photosystem II CP47 reaction center protein (508 aa).

6 helical membrane passes run 21–36 (SVHI…WAGS), 101–115 (IVFS…IWHW), 140–156 (GIHL…FGAF), 203–218 (IAAG…FHLS), 237–252 (VLSS…AFVV), and 457–472 (SFAL…HGAR).

It belongs to the PsbB/PsbC family. PsbB subfamily. PSII is composed of 1 copy each of membrane proteins PsbA, PsbB, PsbC, PsbD, PsbE, PsbF, PsbH, PsbI, PsbJ, PsbK, PsbL, PsbM, PsbT, PsbX, PsbY, PsbZ, Psb30/Ycf12, at least 3 peripheral proteins of the oxygen-evolving complex and a large number of cofactors. It forms dimeric complexes. Binds multiple chlorophylls. PSII binds additional chlorophylls, carotenoids and specific lipids. is required as a cofactor.

The protein localises to the plastid. Its subcellular location is the chloroplast thylakoid membrane. In terms of biological role, one of the components of the core complex of photosystem II (PSII). It binds chlorophyll and helps catalyze the primary light-induced photochemical processes of PSII. PSII is a light-driven water:plastoquinone oxidoreductase, using light energy to abstract electrons from H(2)O, generating O(2) and a proton gradient subsequently used for ATP formation. This is Photosystem II CP47 reaction center protein from Aethionema grandiflorum (Persian stone-cress).